Reading from the N-terminus, the 564-residue chain is Arginine--tRNA ligase (564 aa).

Positions 122–132 (PNIAKPFSIGH) match the 'HIGH' region motif.

This sequence belongs to the class-I aminoacyl-tRNA synthetase family. As to quaternary structure, monomer.

The protein localises to the cytoplasm. It carries out the reaction tRNA(Arg) + L-arginine + ATP = L-arginyl-tRNA(Arg) + AMP + diphosphate. The protein is Arginine--tRNA ligase of Lactococcus lactis subsp. cremoris (strain SK11).